A 547-amino-acid polypeptide reads, in one-letter code: Serine/threonine-protein kinase pkn3 (547 aa).

One can recognise a Protein kinase domain in the interval 18-288 (YRVEALIGEG…EAFKAELQAV (271 aa)). Residues 24 to 32 (IGEGGMGKV) and Lys47 each bind ATP. Catalysis depends on Asp142, which acts as the Proton acceptor. Positions 290–299 (KERRRMDSAP) are enriched in basic and acidic residues. A disordered region spans residues 290–327 (KERRRMDSAPRRSANSSAVLAPLPRKSAASPQSDVRDA).

This sequence belongs to the protein kinase superfamily. Ser/Thr protein kinase family.

The catalysed reaction is L-seryl-[protein] + ATP = O-phospho-L-seryl-[protein] + ADP + H(+). The enzyme catalyses L-threonyl-[protein] + ATP = O-phospho-L-threonyl-[protein] + ADP + H(+). This Myxococcus xanthus protein is Serine/threonine-protein kinase pkn3 (pkn3).